Consider the following 147-residue polypeptide: MKKFYSCLPVFLLIGCAQVPLPSSVSKPVQQPGAQQEQLANANSIDECQSLPYVPSDLAKNKSLSNQNADNSASKNSAISSSIFCEKYKQTKEQALTFFQEHPQYMRSKEDEEQLMTEFKKVLLEPGSKNLSIYQTLLSAHERLQAL.

The N-terminal stretch at 1 to 15 (MKKFYSCLPVFLLIG) is a signal peptide. Cys16 carries N-palmitoyl cysteine lipidation. Residue Cys16 is the site of S-diacylglycerol cysteine attachment.

Belongs to the InvH family.

Its subcellular location is the cell outer membrane. Involved in the synthesis of the type III secretion system (T3SS), also called injectisome, which is used to inject bacterial effector proteins into eukaryotic host cells. Pilot protein that is required for the proper localization of the secretin InvG/SctC in the outer membrane. Necessary for efficient adherence and entry of these organisms into cultured epithelial cells. This chain is SPI-1 type 3 secretion system pilotin, found in Salmonella choleraesuis (strain SC-B67).